The chain runs to 380 residues: Acetylornithine deacetylase (380 aa).

His-79 is a Zn(2+) binding site. The active site involves Asp-81. Residue Asp-109 participates in Zn(2+) binding. The active site involves Glu-139. Zn(2+) contacts are provided by Glu-140, Glu-164, and His-351.

The protein belongs to the peptidase M20A family. ArgE subfamily. In terms of assembly, homodimer. Zn(2+) serves as cofactor. Requires Co(2+) as cofactor. It depends on glutathione as a cofactor.

The protein localises to the cytoplasm. It catalyses the reaction N(2)-acetyl-L-ornithine + H2O = L-ornithine + acetate. Its pathway is amino-acid biosynthesis; L-arginine biosynthesis; L-ornithine from N(2)-acetyl-L-ornithine (linear): step 1/1. Its function is as follows. Catalyzes the hydrolysis of the amide bond of N(2)-acetylated L-amino acids. Cleaves the acetyl group from N-acetyl-L-ornithine to form L-ornithine, an intermediate in L-arginine biosynthesis pathway, and a branchpoint in the synthesis of polyamines. The protein is Acetylornithine deacetylase of Myxococcus xanthus.